A 349-amino-acid polypeptide reads, in one-letter code: 2-oxoglutarate and iron-dependent oxygenase domain-containing protein 2 (349 aa).

The Fe2OG dioxygenase domain maps to 211-305; it reads DSHRAFVVKY…RWNLILWMRA (95 aa). His-231, Asp-233, and His-286 together coordinate Fe cation. Arg-296 contributes to the 2-oxoglutarate binding site.

This sequence belongs to the OGFOD2 family. The cofactor is Fe(2+). It depends on L-ascorbate as a cofactor.

This Xenopus tropicalis (Western clawed frog) protein is 2-oxoglutarate and iron-dependent oxygenase domain-containing protein 2 (ogfod2).